The following is a 115-amino-acid chain: NADH-ubiquinone oxidoreductase chain 3 (115 aa).

Transmembrane regions (helical) follow at residues 4–24 (FIVM…AFWL), 55–75 (FFLV…LLPL), and 86–106 (ITML…AYEW).

Belongs to the complex I subunit 3 family. Core subunit of respiratory chain NADH dehydrogenase (Complex I) which is composed of 45 different subunits. Interacts with TMEM186. Interacts with TMEM242.

The protein resides in the mitochondrion inner membrane. The enzyme catalyses a ubiquinone + NADH + 5 H(+)(in) = a ubiquinol + NAD(+) + 4 H(+)(out). Functionally, core subunit of the mitochondrial membrane respiratory chain NADH dehydrogenase (Complex I) which catalyzes electron transfer from NADH through the respiratory chain, using ubiquinone as an electron acceptor. Essential for the catalytic activity of complex I. The protein is NADH-ubiquinone oxidoreductase chain 3 of Reithrodontomys fulvescens (Fulvous harvest mouse).